A 246-amino-acid chain; its full sequence is MTLDLDAQKKDEKLLLATIQQEYKILAEYKMIESEKLSGIYVIPSYANSLQWFGVFFGRHGFYEKSVFRFSILLSDGFPDDKSVPAIVFQHNVVHPLVCPYTYSLDLSHAFHEWRPAEDHLWQVLKYMQAIFADPLESIRNVSTVHERSNAEIIKLLNNNRDAYAALVQESILESKAHIYDNPHTEDPHYIIFEKFQDDIHGPVLEQIRQNRATVGSTESGGGGGAATGLSWVKFKEGEFKPLSIE.

Residues 20 to 177 form the UBC core domain; the sequence is QQEYKILAEY…VQESILESKA (158 aa).

It belongs to the ubiquitin-conjugating enzyme family. FTS subfamily.

This is Protein crossbronx (cbx) from Drosophila grimshawi (Hawaiian fruit fly).